Here is a 332-residue protein sequence, read N- to C-terminus: Apoptosis-enhancing nuclease (332 aa).

A disordered region spans residues 1–102; that stretch reads MVPREVPESS…VPREAPSSGP (102 aa). The segment covering 20–36 has biased composition (basic residues); it reads ARRRHKRRSRQHQRFMA. The Nucleolar localization signal motif lies at 21–29; sequence RRRHKRRSR. Residues 63–73 are compositionally biased toward polar residues; it reads QTPAGTEASGN. The Exonuclease domain occupies 105 to 261; sequence YVAIDCEMVG…EDAMTAMELY (157 aa). The short motif at 160–183 is the Nuclear localization signal element; it reads RQHMHKAIPFQVAQKEILKLLKGK. Positions 272 to 332 are disordered; the sequence is VASTAKAHPE…EGQGARSAPP (61 aa). Basic and acidic residues predominate over residues 310-321; sequence GDTREAQDRQEG.

It is found in the nucleus. The protein resides in the nucleolus. Its function is as follows. Exonuclease with activity against single- and double-stranded DNA and RNA. Mediates p53-induced apoptosis. When induced by p53 following DNA damage, digests double-stranded DNA to form single-stranded DNA and amplifies DNA damage signals, leading to enhancement of apoptosis. In Rattus norvegicus (Rat), this protein is Apoptosis-enhancing nuclease.